We begin with the raw amino-acid sequence, 320 residues long: tRNA (guanine(10)-N2)-dimethyltransferase (320 aa).

The THUMP domain occupies 46–136 (EKFFERLAYT…DDKCYVGLLE (91 aa)).

Belongs to the methyltransferase superfamily. Trm-G10 family. As to quaternary structure, monomer.

The protein resides in the cytoplasm. The enzyme catalyses guanosine(10) in tRNA + 2 S-adenosyl-L-methionine = N(2)-dimethylguanosine(10) in tRNA + 2 S-adenosyl-L-homocysteine + 2 H(+). Its function is as follows. Catalyzes the adenosylmethionine-dependent methylation of the exocyclic amino group (N(2)) of guanosine at position 10 of various tRNAs. Acts via a two-step process that leads to the formation of either N(2)-monomethyl (m(2)G) or N(2)-dimethylguanosine (m(2)(2)G). This chain is tRNA (guanine(10)-N2)-dimethyltransferase (trmG10), found in Archaeoglobus fulgidus (strain ATCC 49558 / DSM 4304 / JCM 9628 / NBRC 100126 / VC-16).